A 283-amino-acid polypeptide reads, in one-letter code: 4-hydroxy-tetrahydrodipicolinate reductase (283 aa).

NAD(+) contacts are provided by residues 15–20 (GALGRM) and 116–118 (GTT). Residue H172 is the Proton donor/acceptor of the active site. Position 173 (H173) interacts with (S)-2,3,4,5-tetrahydrodipicolinate. The active-site Proton donor is the K176. Residue 182–183 (GT) coordinates (S)-2,3,4,5-tetrahydrodipicolinate.

It belongs to the DapB family.

It localises to the cytoplasm. The catalysed reaction is (S)-2,3,4,5-tetrahydrodipicolinate + NAD(+) + H2O = (2S,4S)-4-hydroxy-2,3,4,5-tetrahydrodipicolinate + NADH + H(+). The enzyme catalyses (S)-2,3,4,5-tetrahydrodipicolinate + NADP(+) + H2O = (2S,4S)-4-hydroxy-2,3,4,5-tetrahydrodipicolinate + NADPH + H(+). It participates in amino-acid biosynthesis; L-lysine biosynthesis via DAP pathway; (S)-tetrahydrodipicolinate from L-aspartate: step 4/4. Its function is as follows. Catalyzes the conversion of 4-hydroxy-tetrahydrodipicolinate (HTPA) to tetrahydrodipicolinate. The protein is 4-hydroxy-tetrahydrodipicolinate reductase of Prochlorococcus marinus (strain MIT 9313).